Here is a 439-residue protein sequence, read N- to C-terminus: Histidinol dehydrogenase (439 aa).

Residues Y132, Q194, and N217 each contribute to the NAD(+) site. Positions 244, 266, and 269 each coordinate substrate. Positions 266 and 269 each coordinate Zn(2+). Residues E335 and H336 each act as proton acceptor in the active site. Substrate is bound by residues H336, D369, E423, and H428. D369 lines the Zn(2+) pocket. H428 serves as a coordination point for Zn(2+).

It belongs to the histidinol dehydrogenase family. The cofactor is Zn(2+).

It catalyses the reaction L-histidinol + 2 NAD(+) + H2O = L-histidine + 2 NADH + 3 H(+). It participates in amino-acid biosynthesis; L-histidine biosynthesis; L-histidine from 5-phospho-alpha-D-ribose 1-diphosphate: step 9/9. Functionally, catalyzes the sequential NAD-dependent oxidations of L-histidinol to L-histidinaldehyde and then to L-histidine. This Schizosaccharomyces pombe (strain 972 / ATCC 24843) (Fission yeast) protein is Histidinol dehydrogenase (his2).